A 44-amino-acid chain; its full sequence is MQDLKTYLSTAPVLAILCVSFLAALLIEINRFFPDALFLSLSFS.

A helical transmembrane segment spans residues 7-27 (YLSTAPVLAILCVSFLAALLI).

This sequence belongs to the PsaJ family.

It localises to the plastid. The protein resides in the chloroplast thylakoid membrane. In terms of biological role, may help in the organization of the PsaE and PsaF subunits. This chain is Photosystem I reaction center subunit IX, found in Pinus thunbergii (Japanese black pine).